The primary structure comprises 411 residues: LL-diaminopimelate aminotransferase (411 aa).

Substrate-binding residues include Y15 and G42. Residues Y72, 108 to 109, Y132, N187, Y218, and 246 to 248 contribute to the pyridoxal 5'-phosphate site; these read SK and SFS. 3 residues coordinate substrate: K109, Y132, and N187. Position 249 is an N6-(pyridoxal phosphate)lysine (K249). Pyridoxal 5'-phosphate is bound by residues R257 and N292. Residues N292 and R388 each contribute to the substrate site.

It belongs to the class-I pyridoxal-phosphate-dependent aminotransferase family. LL-diaminopimelate aminotransferase subfamily. As to quaternary structure, homodimer. Pyridoxal 5'-phosphate serves as cofactor.

The enzyme catalyses (2S,6S)-2,6-diaminopimelate + 2-oxoglutarate = (S)-2,3,4,5-tetrahydrodipicolinate + L-glutamate + H2O + H(+). It participates in amino-acid biosynthesis; L-lysine biosynthesis via DAP pathway; LL-2,6-diaminopimelate from (S)-tetrahydrodipicolinate (aminotransferase route): step 1/1. Functionally, involved in the synthesis of meso-diaminopimelate (m-DAP or DL-DAP), required for both lysine and peptidoglycan biosynthesis. Catalyzes the direct conversion of tetrahydrodipicolinate to LL-diaminopimelate. This chain is LL-diaminopimelate aminotransferase, found in Gloeothece citriformis (strain PCC 7424) (Cyanothece sp. (strain PCC 7424)).